A 684-amino-acid polypeptide reads, in one-letter code: Methionine--tRNA ligase (684 aa).

The short motif at 15 to 25 (PYANGAIHLGH) is the 'HIGH' region element. Zn(2+) is bound by residues C146, C149, C159, and C162. A 'KMSKS' region motif is present at residues 331–335 (KMSKS). ATP is bound at residue K334. One can recognise a tRNA-binding domain in the interval 582 to 684 (DFAKLDLRVA…SGVTAGMQVR (103 aa)).

The protein belongs to the class-I aminoacyl-tRNA synthetase family. MetG type 1 subfamily. As to quaternary structure, homodimer. Zn(2+) serves as cofactor.

It localises to the cytoplasm. It catalyses the reaction tRNA(Met) + L-methionine + ATP = L-methionyl-tRNA(Met) + AMP + diphosphate. Functionally, is required not only for elongation of protein synthesis but also for the initiation of all mRNA translation through initiator tRNA(fMet) aminoacylation. This chain is Methionine--tRNA ligase, found in Glaesserella parasuis serovar 5 (strain SH0165) (Haemophilus parasuis).